The primary structure comprises 190 residues: Holliday junction branch migration complex subunit RuvA (190 aa).

The domain I stretch occupies residues 1–64 (MIGKLSGTLD…EDAQILYGFA (64 aa)). Residues 65–137 (TSQERAAFRE…LKGKLGPDIG (73 aa)) form a domain II region. The tract at residues 137–141 (GVAAS) is flexible linker. The tract at residues 142–190 (VANDSQADILQALLALGYSDKEAAAALKALPSDVGVSEGIRLALRALGK) is domain III.

Belongs to the RuvA family. In terms of assembly, homotetramer. Forms an RuvA(8)-RuvB(12)-Holliday junction (HJ) complex. HJ DNA is sandwiched between 2 RuvA tetramers; dsDNA enters through RuvA and exits via RuvB. An RuvB hexamer assembles on each DNA strand where it exits the tetramer. Each RuvB hexamer is contacted by two RuvA subunits (via domain III) on 2 adjacent RuvB subunits; this complex drives branch migration. In the full resolvosome a probable DNA-RuvA(4)-RuvB(12)-RuvC(2) complex forms which resolves the HJ.

Its subcellular location is the cytoplasm. Its function is as follows. The RuvA-RuvB-RuvC complex processes Holliday junction (HJ) DNA during genetic recombination and DNA repair, while the RuvA-RuvB complex plays an important role in the rescue of blocked DNA replication forks via replication fork reversal (RFR). RuvA specifically binds to HJ cruciform DNA, conferring on it an open structure. The RuvB hexamer acts as an ATP-dependent pump, pulling dsDNA into and through the RuvAB complex. HJ branch migration allows RuvC to scan DNA until it finds its consensus sequence, where it cleaves and resolves the cruciform DNA. The polypeptide is Holliday junction branch migration complex subunit RuvA (Albidiferax ferrireducens (strain ATCC BAA-621 / DSM 15236 / T118) (Rhodoferax ferrireducens)).